Here is a 725-residue protein sequence, read N- to C-terminus: Catalase-peroxidase (725 aa).

2 stretches are compositionally biased toward polar residues: residues 1–12 (MSTSNDPSNNAS) and 23–32 (PKQSAGSGTA). The signal sequence occupies residues 1 to 20 (MSTSNDPSNNASAGKCPFHA). A disordered region spans residues 1–35 (MSTSNDPSNNASAGKCPFHAETPKQSAGSGTANRD). A cross-link (tryptophyl-tyrosyl-methioninium (Trp-Tyr) (with M-252)) is located at residues 105 to 226 (WHGAGTYRTV…IGATEMGLIY (122 aa)). Catalysis depends on H106, which acts as the Proton acceptor. Residues 226–252 (YVNPEGPNASGEPLSAAAAIRATFGNM) constitute a cross-link (tryptophyl-tyrosyl-methioninium (Tyr-Met) (with W-105)). Residue H267 participates in heme b binding.

This sequence belongs to the peroxidase family. Peroxidase/catalase subfamily. In terms of assembly, homodimer or homotetramer. Heme b serves as cofactor. Formation of the three residue Trp-Tyr-Met cross-link is important for the catalase, but not the peroxidase activity of the enzyme.

It catalyses the reaction H2O2 + AH2 = A + 2 H2O. The catalysed reaction is 2 H2O2 = O2 + 2 H2O. Functionally, bifunctional enzyme with both catalase and broad-spectrum peroxidase activity. The sequence is that of Catalase-peroxidase from Klebsiella pneumoniae subsp. pneumoniae (strain ATCC 700721 / MGH 78578).